The chain runs to 34 residues: Mytilin-A (34 aa).

4 cysteine pairs are disulfide-bonded: C2–C27, C6–C29, C10–C31, and C15–C34.

Its subcellular location is the secreted. In terms of biological role, has antibacterial activity against A.viridans, B.megaterium, M.luteus, E.faecalis, S.aureus and E.coli. It is active against the marine species A.carrageenovora, P.alginovora and C.drobachiensis. In Mytilus edulis (Blue mussel), this protein is Mytilin-A.